The primary structure comprises 211 residues: Ribosomal RNA small subunit methyltransferase G (211 aa).

S-adenosyl-L-methionine-binding positions include Gly81, Leu86, Val132–Glu133, and Arg147.

It belongs to the methyltransferase superfamily. RNA methyltransferase RsmG family.

The protein resides in the cytoplasm. The enzyme catalyses guanosine(527) in 16S rRNA + S-adenosyl-L-methionine = N(7)-methylguanosine(527) in 16S rRNA + S-adenosyl-L-homocysteine. Specifically methylates the N7 position of guanine in position 527 of 16S rRNA. The sequence is that of Ribosomal RNA small subunit methyltransferase G from Actinobacillus succinogenes (strain ATCC 55618 / DSM 22257 / CCUG 43843 / 130Z).